The chain runs to 310 residues: D-alanyl-D-alanine endopeptidase (310 aa).

The N-terminal stretch at 1–23 (MRNRLLSLVTLFLSLSVATAVSA) is a signal peptide. The Acyl-ester intermediate role is filled by Ser-66. Residue Lys-69 is the Proton acceptor of the active site. The active site involves Ser-123. Lys-230 lines the substrate pocket.

The protein belongs to the peptidase S11 family.

It is found in the periplasm. Its function is as follows. Cell wall formation. The polypeptide is D-alanyl-D-alanine endopeptidase (pbpG) (Pseudomonas aeruginosa (strain ATCC 15692 / DSM 22644 / CIP 104116 / JCM 14847 / LMG 12228 / 1C / PRS 101 / PAO1)).